We begin with the raw amino-acid sequence, 938 residues long: Isoleucine--tRNA ligase (938 aa).

The 'HIGH' region motif lies at 58-68 (PYANGSIHIGH). Residue Lys183 is modified to N6-acetyllysine. Residue Glu561 participates in L-isoleucyl-5'-AMP binding. The short motif at 602-606 (KMSKS) is the 'KMSKS' region element. Lys605 is a binding site for ATP. Positions 901, 904, 921, and 924 each coordinate Zn(2+).

This sequence belongs to the class-I aminoacyl-tRNA synthetase family. IleS type 1 subfamily. Monomer. Zn(2+) is required as a cofactor.

Its subcellular location is the cytoplasm. It catalyses the reaction tRNA(Ile) + L-isoleucine + ATP = L-isoleucyl-tRNA(Ile) + AMP + diphosphate. Catalyzes the attachment of isoleucine to tRNA(Ile). As IleRS can inadvertently accommodate and process structurally similar amino acids such as valine, to avoid such errors it has two additional distinct tRNA(Ile)-dependent editing activities. One activity is designated as 'pretransfer' editing and involves the hydrolysis of activated Val-AMP. The other activity is designated 'posttransfer' editing and involves deacylation of mischarged Val-tRNA(Ile). This chain is Isoleucine--tRNA ligase, found in Escherichia coli O6:H1 (strain CFT073 / ATCC 700928 / UPEC).